A 337-amino-acid polypeptide reads, in one-letter code: Aspartate carbamoyltransferase catalytic subunit (337 aa).

The carbamoyl phosphate site is built by Arg-57 and Thr-58. Lys-86 is an L-aspartate binding site. Arg-107, His-135, and Gln-138 together coordinate carbamoyl phosphate. L-aspartate contacts are provided by Arg-172 and Arg-234. Residues Leu-274 and Pro-275 each contribute to the carbamoyl phosphate site.

The protein belongs to the aspartate/ornithine carbamoyltransferase superfamily. ATCase family. As to quaternary structure, heterododecamer (2C3:3R2) of six catalytic PyrB chains organized as two trimers (C3), and six regulatory PyrI chains organized as three dimers (R2).

The catalysed reaction is carbamoyl phosphate + L-aspartate = N-carbamoyl-L-aspartate + phosphate + H(+). It functions in the pathway pyrimidine metabolism; UMP biosynthesis via de novo pathway; (S)-dihydroorotate from bicarbonate: step 2/3. Its function is as follows. Catalyzes the condensation of carbamoyl phosphate and aspartate to form carbamoyl aspartate and inorganic phosphate, the committed step in the de novo pyrimidine nucleotide biosynthesis pathway. The chain is Aspartate carbamoyltransferase catalytic subunit from Saccharophagus degradans (strain 2-40 / ATCC 43961 / DSM 17024).